A 256-amino-acid polypeptide reads, in one-letter code: Phosphoribosylaminoimidazole-succinocarboxamide synthase (256 aa).

Residues 234 to 256 form a disordered region; the sequence is KPQKPAAAKKKAPVSKKTVKRTR. Over residues 240–256 the composition is skewed to basic residues; that stretch reads AAKKKAPVSKKTVKRTR.

Belongs to the SAICAR synthetase family.

The enzyme catalyses 5-amino-1-(5-phospho-D-ribosyl)imidazole-4-carboxylate + L-aspartate + ATP = (2S)-2-[5-amino-1-(5-phospho-beta-D-ribosyl)imidazole-4-carboxamido]succinate + ADP + phosphate + 2 H(+). Its pathway is purine metabolism; IMP biosynthesis via de novo pathway; 5-amino-1-(5-phospho-D-ribosyl)imidazole-4-carboxamide from 5-amino-1-(5-phospho-D-ribosyl)imidazole-4-carboxylate: step 1/2. The sequence is that of Phosphoribosylaminoimidazole-succinocarboxamide synthase from Methanoregula boonei (strain DSM 21154 / JCM 14090 / 6A8).